The primary structure comprises 731 residues: DNA ligase (731 aa).

NAD(+)-binding positions include 59-63 (DSEYD), 108-109 (SL), and glutamate 142. Lysine 144 functions as the N6-AMP-lysine intermediate in the catalytic mechanism. Positions 165, 202, 318, and 342 each coordinate NAD(+). Zn(2+) is bound by residues cysteine 434, cysteine 437, cysteine 452, and cysteine 458. In terms of domain architecture, BRCT spans 645–731 (LASSPLSGKI…ENDGQDSIKI (87 aa)).

It belongs to the NAD-dependent DNA ligase family. LigA subfamily. Requires Mg(2+) as cofactor. It depends on Mn(2+) as a cofactor.

It catalyses the reaction NAD(+) + (deoxyribonucleotide)n-3'-hydroxyl + 5'-phospho-(deoxyribonucleotide)m = (deoxyribonucleotide)n+m + AMP + beta-nicotinamide D-nucleotide.. In terms of biological role, DNA ligase that catalyzes the formation of phosphodiester linkages between 5'-phosphoryl and 3'-hydroxyl groups in double-stranded DNA using NAD as a coenzyme and as the energy source for the reaction. It is essential for DNA replication and repair of damaged DNA. This chain is DNA ligase, found in Zymomonas mobilis subsp. mobilis (strain ATCC 31821 / ZM4 / CP4).